Here is a 147-residue protein sequence, read N- to C-terminus: Hemoglobin subunit beta (147 aa).

The 145-residue stretch at 3–147 (HWTAEEKQLI…VAHALARKYH (145 aa)) folds into the Globin domain. H64 and H93 together coordinate heme b.

It belongs to the globin family. Heterotetramer of two alpha chains and two beta chains. Red blood cells.

In terms of biological role, involved in oxygen transport from the lung to the various peripheral tissues. The sequence is that of Hemoglobin subunit beta (HBB) from Anas platyrhynchos (Mallard).